We begin with the raw amino-acid sequence, 404 residues long: Neutral protease 2 homolog AFLA_065450 (404 aa).

An N-terminal signal peptide occupies residues 1–19 (MRFISASSLLLALAPTLNA). A propeptide spanning residues 20–185 (VPVEVAGSAQ…TQAVKILERR (166 aa)) is cleaved from the precursor. Intrachain disulfides connect cysteine 191-cysteine 263 and cysteine 270-cysteine 288. Histidine 313 is a binding site for Zn(2+). The active site involves glutamate 314. The Zn(2+) site is built by histidine 317 and aspartate 328.

This sequence belongs to the peptidase M35 family. Zn(2+) is required as a cofactor.

The protein resides in the secreted. It carries out the reaction Preferential cleavage of bonds with hydrophobic residues in P1'. Also 3-Asn-|-Gln-4 and 8-Gly-|-Ser-9 bonds in insulin B chain.. Its function is as follows. Secreted metalloproteinase that allows assimilation of proteinaceous substrates. Shows high activities on basic nuclear substrates such as histone and protamine. The polypeptide is Neutral protease 2 homolog AFLA_065450 (Aspergillus flavus (strain ATCC 200026 / FGSC A1120 / IAM 13836 / NRRL 3357 / JCM 12722 / SRRC 167)).